Here is a 207-residue protein sequence, read N- to C-terminus: Thymidylate kinase (207 aa).

7-14 (GCEGTGKT) provides a ligand contact to ATP.

Belongs to the thymidylate kinase family.

The catalysed reaction is dTMP + ATP = dTDP + ADP. In terms of biological role, phosphorylation of dTMP to form dTDP in both de novo and salvage pathways of dTTP synthesis. The sequence is that of Thymidylate kinase from Aster yellows witches'-broom phytoplasma (strain AYWB).